Reading from the N-terminus, the 156-residue chain is 6,7-dimethyl-8-ribityllumazine synthase (156 aa).

5-amino-6-(D-ribitylamino)uracil contacts are provided by residues Phe23, 57–59 (AYE), and 81–83 (AII). (2S)-2-hydroxy-3-oxobutyl phosphate is bound at residue 86–87 (GT). The active-site Proton donor is His89. Phe114 serves as a coordination point for 5-amino-6-(D-ribitylamino)uracil. Position 128 (Arg128) interacts with (2S)-2-hydroxy-3-oxobutyl phosphate.

It belongs to the DMRL synthase family.

The catalysed reaction is (2S)-2-hydroxy-3-oxobutyl phosphate + 5-amino-6-(D-ribitylamino)uracil = 6,7-dimethyl-8-(1-D-ribityl)lumazine + phosphate + 2 H2O + H(+). The protein operates within cofactor biosynthesis; riboflavin biosynthesis; riboflavin from 2-hydroxy-3-oxobutyl phosphate and 5-amino-6-(D-ribitylamino)uracil: step 1/2. Catalyzes the formation of 6,7-dimethyl-8-ribityllumazine by condensation of 5-amino-6-(D-ribitylamino)uracil with 3,4-dihydroxy-2-butanone 4-phosphate. This is the penultimate step in the biosynthesis of riboflavin. The polypeptide is 6,7-dimethyl-8-ribityllumazine synthase (Helicobacter pylori (strain HPAG1)).